The sequence spans 188 residues: Putative manganese efflux pump MntP (188 aa).

6 helical membrane passes run 2–22, 40–60, 66–86, 107–127, 133–153, and 167–187; these read LYIE…AVSV, IASV…TMGL, ICAF…GKMI, LCGL…SLAI, LLQA…GVYF, and LIGG…HLFF.

It belongs to the MntP (TC 9.B.29) family.

The protein localises to the cell inner membrane. Probably functions as a manganese efflux pump. The protein is Putative manganese efflux pump MntP of Parabacteroides distasonis (strain ATCC 8503 / DSM 20701 / CIP 104284 / JCM 5825 / NCTC 11152).